The following is a 215-amino-acid chain: Chloramphenicol acetyltransferase (215 aa).

Histidine 189 functions as the Proton acceptor in the catalytic mechanism.

It belongs to the chloramphenicol acetyltransferase family. Homotrimer.

The catalysed reaction is chloramphenicol + acetyl-CoA = chloramphenicol 3-acetate + CoA. Its function is as follows. This enzyme is an effector of chloramphenicol resistance in bacteria. This Staphylococcus aureus protein is Chloramphenicol acetyltransferase (cat).